We begin with the raw amino-acid sequence, 316 residues long: Cell surface superoxide dismutase [Cu-Zn] 6 (316 aa).

An N-terminal signal peptide occupies residues Met1–Ser18. Cu cation-binding residues include His78, His80, and His96. Positions 96 and 119 each coordinate Zn(2+). A glycan (N-linked (GlcNAc...) asparagine) is linked at Asn128. A Cu cation-binding site is contributed by His159. Residues Asn162 and Asn240 are each glycosylated (N-linked (GlcNAc...) asparagine). The interval Asp243 to His263 is disordered. The segment covering Glu249–Lys258 has biased composition (basic and acidic residues). Residues Asn278 and Asn281 are each glycosylated (N-linked (GlcNAc...) asparagine). The GPI-anchor amidated serine moiety is linked to residue Ser288. The propeptide at Ser289–Val316 is removed in mature form.

Belongs to the Cu-Zn superoxide dismutase family. Cu cation is required as a cofactor. Zn(2+) serves as cofactor. In terms of processing, the GPI-anchor is attached to the protein in the endoplasmic reticulum and serves to target the protein to the cell surface. There, the glucosamine-inositol phospholipid moiety is cleaved off and the GPI-modified mannoprotein is covalently attached via its lipidless GPI glycan remnant to the 1,6-beta-glucan of the outer cell wall layer.

It localises to the secreted. Its subcellular location is the cell wall. It is found in the membrane. It carries out the reaction 2 superoxide + 2 H(+) = H2O2 + O2. In terms of biological role, superoxide dismutases serve to convert damaging superoxide radicals, a key form of ROS, to less damaging hydrogen peroxide that can be converted into water by catalase action. May be involved protection against extracellular stress. This Candida albicans (strain SC5314 / ATCC MYA-2876) (Yeast) protein is Cell surface superoxide dismutase [Cu-Zn] 6 (SOD6).